A 388-amino-acid chain; its full sequence is Plasminogen-binding group A streptococcal M-like protein PAM (388 aa).

Positions 1–29 (RKLKTGTASVAVALTVVGAGLASQTEVKA) are cleaved as a signal peptide. The able to bind plasminogen stretch occupies residues 85 to 113 (VEKLTADAELQRLKNERHEEAELERLKSE). One copy of the A-1 repeat lies at 91 to 103 (DAELQRLKNERHE). Positions 91 to 116 (DAELQRLKNERHEEAELERLKSERHD) are 2 X approximate tandem repeats, type a. 5 stretches are compositionally biased toward basic and acidic residues: residues 95-137 (QRLK…KQEH), 145-168 (INEK…EKQI), 176-189 (LRRD…AKKQ), 218-231 (LRRD…AKKQ), and 260-269 (LRRDLDASRE). Disordered stretches follow at residues 95 to 189 (QRLK…AKKQ), 204 to 231 (VKEE…AKKQ), and 248 to 269 (EEKQ…ASRE). Residues 104–116 (EAELERLKSERHD) form an A-2 repeat. Residues 147–153 (EKEAEAK) form a B-1 repeat. A 2 X tandem repeats, type b region spans residues 147-161 (EKEAEAKEKEAEQKK). One copy of the B-2 repeat lies at 154–159 (EKEAEQ). C repeat units lie at residues 160–194 (KKLK…EKDL), 202–236 (DKVK…EKGL), and 244–278 (DKVK…EKAL). 4 D repeats span residues 311–316 (AKLEAE), 317–322 (AKALKE), 325–330 (AKQAEE), and 332–337 (AKLRAE). Residues 331–340 (LAKLRAEKAS) are compositionally biased toward basic and acidic residues. The disordered stretch occupies residues 331–388 (LAKLRAEKASDSQTPDAKPGNKAVPGKGQAPQAGTKPNQNKAPMKETKRQLPSTGETT). Residues 381 to 385 (LPSTG) carry the LPXTG sorting signal motif. At Thr-384 the chain carries Pentaglycyl murein peptidoglycan amidated threonine. Residues 385-388 (GETT) constitute a propeptide, removed by sortase.

Belongs to the M protein family.

The protein localises to the secreted. Its subcellular location is the cell wall. Functionally, binds to human plasminogen (and plasmin) via its kringle repeats. Also binds to albumin, immunoglobulin G and fibrinogen. Could provide the bacteria with a mechanism for invasion, as streptococcal-bound plasmin could permit tissue penetration. This chain is Plasminogen-binding group A streptococcal M-like protein PAM (pam), found in Streptococcus pyogenes.